The sequence spans 524 residues: 2-isopropylmalate synthase (524 aa).

Residues 12–274 enclose the Pyruvate carboxyltransferase domain; that stretch reads VIIFDTTLRD…WNRIETTMLT (263 aa). 4 residues coordinate Mn(2+): Asp-21, His-209, His-211, and Asn-245. A regulatory domain region spans residues 398–524; the sequence is KLMSLTVIAG…EDAPTVAVAG (127 aa).

The protein belongs to the alpha-IPM synthase/homocitrate synthase family. LeuA type 1 subfamily. Homodimer. It depends on Mn(2+) as a cofactor.

It localises to the cytoplasm. The enzyme catalyses 3-methyl-2-oxobutanoate + acetyl-CoA + H2O = (2S)-2-isopropylmalate + CoA + H(+). It functions in the pathway amino-acid biosynthesis; L-leucine biosynthesis; L-leucine from 3-methyl-2-oxobutanoate: step 1/4. Its function is as follows. Catalyzes the condensation of the acetyl group of acetyl-CoA with 3-methyl-2-oxobutanoate (2-ketoisovalerate) to form 3-carboxy-3-hydroxy-4-methylpentanoate (2-isopropylmalate). This Rhodopseudomonas palustris (strain TIE-1) protein is 2-isopropylmalate synthase.